Here is a 1124-residue protein sequence, read N- to C-terminus: Phytochrome type A (1124 aa).

The span at 1 to 19 (MSTTRPSQSSNNSGRSRNS) shows a compositional bias: low complexity. The segment at 1-21 (MSTTRPSQSSNNSGRSRNSAR) is disordered. The GAF domain occupies 218–401 (SMERLCDTMV…VFAIHVNKEI (184 aa)). Phytochromobilin is bound at residue C323. 2 consecutive PAS domains span residues 617 to 687 (VTSE…LQGE) and 750 to 821 (DYKA…VNFG). In terms of domain architecture, Histidine kinase spans 901–1120 (YMKRQIRNPL…ILSVELAAAH (220 aa)).

This sequence belongs to the phytochrome family. Homodimer. Post-translationally, contains one covalently linked phytochromobilin chromophore.

In terms of biological role, regulatory photoreceptor which exists in two forms that are reversibly interconvertible by light: the Pr form that absorbs maximally in the red region of the spectrum and the Pfr form that absorbs maximally in the far-red region. Photoconversion of Pr to Pfr induces an array of morphogenic responses, whereas reconversion of Pfr to Pr cancels the induction of those responses. Pfr controls the expression of a number of nuclear genes including those encoding the small subunit of ribulose-bisphosphate carboxylase, chlorophyll A/B binding protein, protochlorophyllide reductase, rRNA, etc. It also controls the expression of its own gene(s) in a negative feedback fashion. This is Phytochrome type A (PHYA) from Lathyrus sativus (White vetchling).